The chain runs to 637 residues: Chaperone protein HtpG (637 aa).

The tract at residues 1–335 (MQGTVNSERL…SSDLPLNISR (335 aa)) is a; substrate-binding. A b region spans residues 336-559 (ETLQNNKIIE…DGSMDIRMER (224 aa)). Residues 560-637 (FLREQKQLNY…RMNSVLSQIN (78 aa)) are c.

The protein belongs to the heat shock protein 90 family. As to quaternary structure, homodimer.

It is found in the cytoplasm. Functionally, molecular chaperone. Has ATPase activity. The chain is Chaperone protein HtpG from Ehrlichia ruminantium (strain Gardel).